The sequence spans 560 residues: Eukaryotic translation initiation factor 3 subunit D-1 (560 aa).

Residues 98 to 166 (VQKPPHQRGR…RGPPPKMRES (69 aa)) are disordered. The span at 100–121 (KPPHQRGRFRNMRNSRSGRGRN) shows a compositional bias: basic residues. The residue at position 128 (Thr128) is a Phosphothreonine. A compositionally biased stretch (basic residues) spans 147-156 (GRGMGKKFGH). The tract at residues 291 to 305 (EFDLLTVNESSVEPP) is RNA gate.

This sequence belongs to the eIF-3 subunit D family. Component of the eukaryotic translation initiation factor 3 (eIF-3) complex. The eIF-3 complex interacts with pix.

The protein resides in the cytoplasm. MRNA cap-binding component of the eukaryotic translation initiation factor 3 (eIF-3) complex, which is involved in protein synthesis of a specialized repertoire of mRNAs and, together with other initiation factors, stimulates binding of mRNA and methionyl-tRNAi to the 40S ribosome. The eIF-3 complex specifically targets and initiates translation of a subset of mRNAs involved in cell proliferation. In the eIF-3 complex, eif3d specifically recognizes and binds the 7-methylguanosine cap of a subset of mRNAs. This is Eukaryotic translation initiation factor 3 subunit D-1 from Drosophila yakuba (Fruit fly).